Consider the following 262-residue polypeptide: MSDDNRIESMAARLREAQSSRQTIAPLREACPEGDATLAYAIQQVNNDLRAANGERLVGRKIGLTSPAVQKQLGVGQPDFGALFASMAYGDSQPMPLASLVQPKVEAEIALVLERDLTAEKNTFADLIGATAYALAAIEVVDSRIRDWDIRFFDTVADNASSALFVLGSRPVLLRDIDLTACAMTLTQDGEILSRGNGTACLGNPLNAAAWLADRMVRLGTPLRAGDIVLTGALGPMVAVKAAGTYTAHIEGLGSVRASFSE.

The protein belongs to the hydratase/decarboxylase family. MhpD subfamily. A divalent metal cation serves as cofactor.

The catalysed reaction is (S)-4-hydroxy-2-oxopentanoate = (2Z)-2-hydroxypenta-2,4-dienoate + H2O. It functions in the pathway aromatic compound metabolism; 3-phenylpropanoate degradation. Catalyzes the conversion of 2-hydroxypentadienoic acid (enolic form of 2-oxopent-4-enoate) to 4-hydroxy-2-ketopentanoic acid. This is 2-keto-4-pentenoate hydratase from Paraburkholderia phymatum (strain DSM 17167 / CIP 108236 / LMG 21445 / STM815) (Burkholderia phymatum).